The sequence spans 619 residues: MTIIYFVLAALALGFLILIHELGHLLAAKAVGMSVESFSIGFGPALVRKKMGSVEYRIGAIPFGGYVRIKGMDRNDKDNSGDKEKTVYDIPEGFFSKSPWKRIFVLAAGPLANLLVAIFVFGILYFSGGRTKSFSEYTSIVGWVHPSLEQQGLHAGDQIFFCNGQPYSGHKMAFSSSLLERKLSLQGQHPAYFSESEAFSLEAPFNPNMEGVPCLGASYLLYRGSDPLPEKSPLVDAGLSEGDRLVWMDGLLVFSGAQVSQMLNEKQSFLRVERQGKVVFVRQARVLAGDLTLTPYFKNELIDCQYEAGLKGKWASLYTLPYIINGDGFVESKVKLLNDERVSLDYNLELGDKIVAVDGIPVMSNADILRLVQDHRVSLIFQRMSPEQLTVLEQKAADQAFINSYDMDDLLRVAESVGEEREVSRLGDYRLVTRVQPRPWAHIYSEALLDKQRALASKFRDEQERRYYLERIEAEKQRISLGIPLKDLAVQYNPDPWVLMEESVSDSLKTVKALGMGRVSPQWLSGPVGIVRILHTGWSVGIPEALAWIGLISVNLAVLNLLPIPVLDGGYILLCLWEILSRRRLNMRLVEKALVPFMILLVLFFVFLTLQDLSRVFVG.

Residue H20 coordinates Zn(2+). E21 is a catalytic residue. Residue H24 participates in Zn(2+) binding. Helical transmembrane passes span 103–125, 558–580, and 593–610; these read IFVL…GILY, VLNL…WEIL, and ALVP…FLTL.

It belongs to the peptidase M50B family. The cofactor is Zn(2+).

It localises to the cell inner membrane. The polypeptide is Putative zinc metalloprotease CT_072 (Chlamydia trachomatis serovar D (strain ATCC VR-885 / DSM 19411 / UW-3/Cx)).